Here is a 308-residue protein sequence, read N- to C-terminus: Tetraacyldisaccharide 4'-kinase (308 aa).

Position 63–70 (63–70 (SFGGNGKT)) interacts with ATP.

This sequence belongs to the LpxK family.

The enzyme catalyses a lipid A disaccharide + ATP = a lipid IVA + ADP + H(+). Its pathway is glycolipid biosynthesis; lipid IV(A) biosynthesis; lipid IV(A) from (3R)-3-hydroxytetradecanoyl-[acyl-carrier-protein] and UDP-N-acetyl-alpha-D-glucosamine: step 6/6. In terms of biological role, transfers the gamma-phosphate of ATP to the 4'-position of a tetraacyldisaccharide 1-phosphate intermediate (termed DS-1-P) to form tetraacyldisaccharide 1,4'-bis-phosphate (lipid IVA). This is Tetraacyldisaccharide 4'-kinase from Campylobacter jejuni subsp. jejuni serotype O:23/36 (strain 81-176).